We begin with the raw amino-acid sequence, 499 residues long: Endosomal/lysosomal proton channel TMEM175 (499 aa).

A compositionally biased stretch (polar residues) spans 1-10 (MSRLQVQEQA). The interval 1 to 26 (MSRLQVQEQAVDSEGDSSLYRRDEEG) is disordered. The Cytoplasmic segment spans residues 1 to 30 (MSRLQVQEQAVDSEGDSSLYRRDEEGTQSS). The helical transmembrane segment at 31-53 (HRMLGFSDALLSIIATVMILPVT) threads the bilayer. A RxxxFSD motif 1 motif is present at residues 32–38 (RMLGFSD). Topologically, residues 54–74 (HTEISPEQQFDKSIQKLLATR) are lumenal. The short helix H1-1 stretch occupies residues 55–60 (TEISPE). Residues 62–68 (QFDKSIQ) are short helix H2-1. Residues 75 to 97 (IAVYLMTFLIVTVAWAAHTRLFQ) traverse the membrane as a helical segment. Topologically, residues 98 to 103 (VVGKID) are cytoplasmic. Residues 104–125 (DTLALLNLACMMTITLLPYTFS) traverse the membrane as a helical segment. The Lumenal portion of the chain corresponds to 126-135 (LMVTFPDVPL). A helical transmembrane segment spans residues 136–157 (GIFLFCMCVIAIGSVQAMIVGY). Residues 158–181 (AFHFPHLLNPQIQCSTHRALSRRH) are Cytoplasmic-facing. The chain crosses the membrane as a helical span at residues 182 to 202 (ILHLVLRGPALCFVAAVFSLF). Residues 203–207 (FFPLS) are Lumenal-facing. A helical membrane pass occupies residues 208–227 (YLLMVTVIFLPHISKATTWC). The Cytoplasmic portion of the chain corresponds to 228–254 (KDKFMGHRESPAHNVEPFSIDLHAPLS). Residues 255 to 279 (KERVEAFSDGVYAIVATLLILDICE) form a helical membrane-spanning segment. A RxxxFSD motif 2 motif is present at residues 257 to 263 (RVEAFSD). Residues 280–306 (DNVPDPKDVQQKFSGSLVAALGAYGPQ) lie on the Lumenal side of the membrane. The short helix H1-2 stretch occupies residues 285–293 (PKDVQQKFS). The short helix H2-2 stretch occupies residues 295-301 (SLVAALG). A helical transmembrane segment spans residues 307-329 (FLAYFGSFATVGLLWFAHHSLFL). Residues 330–335 (HVRKAT) are Cytoplasmic-facing. Residues 336-357 (QTMGLFNILSLAFVGGLPLAYQ) traverse the membrane as a helical segment. At 358-372 (QTSAFARQPRDELER) the chain is on the lumenal side. Residues 373 to 393 (VRVSCAIIFFASIFQFAIWTT) traverse the membrane as a helical segment. The Cytoplasmic segment spans residues 394–413 (ALLHQRETLQPAVQFGGQEH). The helical transmembrane segment at 414–437 (AFMFAKLALYPCASLLAFAATCLL) threads the bilayer. Residues 438–439 (SR) lie on the Lumenal side of the membrane. The helical transmembrane segment at 440–466 (FSTAIFHLMQIAVPFAFLLLRLLVRLA) threads the bilayer. At 467-499 (LAGLQVLWDLWPERPQQDQGEPETQSQLLPASC) the chain is on the cytoplasmic side.

Belongs to the TMEM175 family. Homodimer. Interacts with AKT (AKT1, AKT2 or AKT3); leading to formation of the lysoK(GF) complex, which activates the channel. Interacts with LAMP1; inhibiting the proton channel activity of TMEM175. Interacts with LAMP2; inhibiting the proton channel activity of TMEM175.

The protein resides in the endosome membrane. It is found in the lysosome membrane. The catalysed reaction is H(+)(in) = H(+)(out). It catalyses the reaction K(+)(in) = K(+)(out). With respect to regulation, active at low pH (under pH 4.6): proton channel activity is activated by luminal side protons. Polyunsaturated fatty acids, such as arachidonic acid, also activate the channel activity. Proton channel activity is directly inhibited by LAMP1 or LAMP2, facilitating lysosomal acidification. Channel activity is activated following interaction with AKT (AKT1, AKT2 or AKT3): interaction promotes activation from closed to an open state. Activation by AKT is independent of AKT serine/threonine-protein kinase activity. Proton-activated proton channel that catalyzes proton efflux from endosomes and lysosomes to maintain a steady-state pH. Activated at low pH (under pH 4.6) by luminal side protons: selectively mediates lysosomal proton release from lysosomes, eliciting a proton leak that balances V-ATPase activity to maintain pH homeostasis. Regulation of lumenal pH stability is required for autophagosome-lysosome fusion. Also acts as a potassium channel at higher pH, regulating potassium conductance in endosomes and lysosomes. Constitutes the pore-forming subunit of the lysoK(GF) complex, a complex activated by extracellular growth factors. The lysoK(GF) complex is composed of TMEM175 and AKT (AKT1, AKT2 or AKT3), a major target of growth factor receptors: in the complex, TMEM175 channel is opened by conformational changes by AKT, leading to its activation. The lysoK(GF) complex is required to protect neurons against stress-induced damage. This Rattus norvegicus (Rat) protein is Endosomal/lysosomal proton channel TMEM175.